The primary structure comprises 423 residues: Putative competence-damage inducible protein (423 aa).

It belongs to the CinA family.

In Streptococcus pyogenes serotype M4 (strain MGAS10750), this protein is Putative competence-damage inducible protein.